We begin with the raw amino-acid sequence, 294 residues long: 4-hydroxy-tetrahydrodipicolinate synthase (294 aa).

Thr-47 contributes to the pyruvate binding site. The Proton donor/acceptor role is filled by Tyr-135. Lys-163 functions as the Schiff-base intermediate with substrate in the catalytic mechanism. Thr-205 is a pyruvate binding site.

The protein belongs to the DapA family. Homotetramer; dimer of dimers.

It localises to the cytoplasm. It catalyses the reaction L-aspartate 4-semialdehyde + pyruvate = (2S,4S)-4-hydroxy-2,3,4,5-tetrahydrodipicolinate + H2O + H(+). It functions in the pathway amino-acid biosynthesis; L-lysine biosynthesis via DAP pathway; (S)-tetrahydrodipicolinate from L-aspartate: step 3/4. Catalyzes the condensation of (S)-aspartate-beta-semialdehyde [(S)-ASA] and pyruvate to 4-hydroxy-tetrahydrodipicolinate (HTPA). This Rickettsia akari (strain Hartford) protein is 4-hydroxy-tetrahydrodipicolinate synthase.